Reading from the N-terminus, the 300-residue chain is Zinc finger protein 705B (300 aa).

One can recognise a KRAB domain in the interval 7 to 78 (VTFEDVAIDF…GRVFLQDQNP (72 aa)). 3 consecutive C2H2-type zinc fingers follow at residues 172 to 194 (YQCNLCEKAYTNCFYLRRHKMTH), 200 to 222 (YACHLCGKAFTQCSHLRRHEKTH), and 228 to 250 (YKCHQCGKAFIQSFNLRRHERTH). Residues 256 to 278 (YECDKSGKAFSQSSGFRGNKIIH) form a C2H2-type 4; degenerate zinc finger.

It belongs to the krueppel C2H2-type zinc-finger protein family.

The protein resides in the nucleus. May be involved in transcriptional regulation. This Homo sapiens (Human) protein is Zinc finger protein 705B (ZNF705B).